The primary structure comprises 208 residues: Dephospho-CoA kinase (208 aa).

The DPCK domain maps to 5 to 201; it reads IVALTGGIGS…QRYLALAASA (197 aa). 13-18 provides a ligand contact to ATP; that stretch reads GSGKST.

This sequence belongs to the CoaE family.

The protein resides in the cytoplasm. It catalyses the reaction 3'-dephospho-CoA + ATP = ADP + CoA + H(+). The protein operates within cofactor biosynthesis; coenzyme A biosynthesis; CoA from (R)-pantothenate: step 5/5. Its function is as follows. Catalyzes the phosphorylation of the 3'-hydroxyl group of dephosphocoenzyme A to form coenzyme A. The chain is Dephospho-CoA kinase from Sodalis glossinidius (strain morsitans).